A 214-amino-acid chain; its full sequence is Probable GTP-binding protein EngB (214 aa).

Positions 31 to 214 (GPPEIAFAGR…LRAAILQTIA (184 aa)) constitute an EngB-type G domain. Residues 39–46 (GRSNVGKS), 66–70 (GRTQE), 93–96 (DMPG), 160–163 (TKSD), and 194–196 (TSS) contribute to the GTP site. Mg(2+)-binding residues include Ser46 and Thr68.

Belongs to the TRAFAC class TrmE-Era-EngA-EngB-Septin-like GTPase superfamily. EngB GTPase family. The cofactor is Mg(2+).

Its function is as follows. Necessary for normal cell division and for the maintenance of normal septation. The protein is Probable GTP-binding protein EngB of Bartonella tribocorum (strain CIP 105476 / IBS 506).